A 397-amino-acid polypeptide reads, in one-letter code: 1-deoxy-D-xylulose 5-phosphate reductoisomerase (397 aa).

The NADPH site is built by Thr10, Gly11, Ser12, Ile13, Asn39, and Asn125. Lys126 is a 1-deoxy-D-xylulose 5-phosphate binding site. Position 127 (Glu127) interacts with NADPH. Residue Asp151 coordinates Mn(2+). Ser152, Glu153, Ser187, and His210 together coordinate 1-deoxy-D-xylulose 5-phosphate. Glu153 contacts Mn(2+). Gly216 contributes to the NADPH binding site. 1-deoxy-D-xylulose 5-phosphate contacts are provided by Ser223, Asn228, Lys229, and Glu232. Glu232 is a binding site for Mn(2+).

It belongs to the DXR family. As to quaternary structure, homodimer. Requires Mg(2+) as cofactor. Mn(2+) serves as cofactor.

It carries out the reaction 2-C-methyl-D-erythritol 4-phosphate + NADP(+) = 1-deoxy-D-xylulose 5-phosphate + NADPH + H(+). It participates in isoprenoid biosynthesis; isopentenyl diphosphate biosynthesis via DXP pathway; isopentenyl diphosphate from 1-deoxy-D-xylulose 5-phosphate: step 1/6. Functionally, catalyzes the NADPH-dependent rearrangement and reduction of 1-deoxy-D-xylulose-5-phosphate (DXP) to 2-C-methyl-D-erythritol 4-phosphate (MEP). The chain is 1-deoxy-D-xylulose 5-phosphate reductoisomerase from Wigglesworthia glossinidia brevipalpis.